The primary structure comprises 249 residues: MAGHSKWANIKHRKARQDAVKGKVFTKIIREIVSAAKQGDPDPDKNPRLRAVIEKALSVNMTRDTINRAVARGTGGDDNDNMDEVSYEGYGIGGVAVLVETMTDNLNRTVSEVRHAFTKNEGNLGTTGSVAYLFNKRGEISFNDISLEDEVMLVALDAGALDIENDGKSLLVITEWENFGHVKDALNAAGLVSDNAEVTMSPSTSAEIDNVEDAEKVMKMIDMLEDIDDVQEVYSNVNFSDEVMAQLEQ.

The protein belongs to the TACO1 family.

Its subcellular location is the cytoplasm. This chain is Probable transcriptional regulatory protein Psyc_0938, found in Psychrobacter arcticus (strain DSM 17307 / VKM B-2377 / 273-4).